A 253-amino-acid chain; its full sequence is Probable transcriptional regulatory protein Hore_12350 (253 aa).

Residues 1–21 (MAGHSKWANIKHKKAKEDRKR) are disordered.

It belongs to the TACO1 family.

The protein localises to the cytoplasm. This chain is Probable transcriptional regulatory protein Hore_12350, found in Halothermothrix orenii (strain H 168 / OCM 544 / DSM 9562).